Reading from the N-terminus, the 167-residue chain is Crossover junction endodeoxyribonuclease RuvC (167 aa).

Residues Asp7, Glu67, and Asp140 contribute to the active site. Mg(2+) contacts are provided by Asp7, Glu67, and Asp140.

It belongs to the RuvC family. In terms of assembly, homodimer which binds Holliday junction (HJ) DNA. The HJ becomes 2-fold symmetrical on binding to RuvC with unstacked arms; it has a different conformation from HJ DNA in complex with RuvA. In the full resolvosome a probable DNA-RuvA(4)-RuvB(12)-RuvC(2) complex forms which resolves the HJ. The cofactor is Mg(2+).

It localises to the cytoplasm. It catalyses the reaction Endonucleolytic cleavage at a junction such as a reciprocal single-stranded crossover between two homologous DNA duplexes (Holliday junction).. The RuvA-RuvB-RuvC complex processes Holliday junction (HJ) DNA during genetic recombination and DNA repair. Endonuclease that resolves HJ intermediates. Cleaves cruciform DNA by making single-stranded nicks across the HJ at symmetrical positions within the homologous arms, yielding a 5'-phosphate and a 3'-hydroxyl group; requires a central core of homology in the junction. The consensus cleavage sequence is 5'-(A/T)TT(C/G)-3'. Cleavage occurs on the 3'-side of the TT dinucleotide at the point of strand exchange. HJ branch migration catalyzed by RuvA-RuvB allows RuvC to scan DNA until it finds its consensus sequence, where it cleaves and resolves the cruciform DNA. This chain is Crossover junction endodeoxyribonuclease RuvC, found in Moorella thermoacetica (strain ATCC 39073 / JCM 9320).